Reading from the N-terminus, the 158-residue chain is Probable cyclic pyranopterin monophosphate synthase (158 aa).

Residues 75–77 and 111–112 each bind substrate; these read MCH and ME. Residue D126 is part of the active site.

The protein belongs to the MoaC family. In terms of assembly, homohexamer; trimer of dimers.

It catalyses the reaction (8S)-3',8-cyclo-7,8-dihydroguanosine 5'-triphosphate = cyclic pyranopterin phosphate + diphosphate. It functions in the pathway cofactor biosynthesis; molybdopterin biosynthesis. Catalyzes the conversion of (8S)-3',8-cyclo-7,8-dihydroguanosine 5'-triphosphate to cyclic pyranopterin monophosphate (cPMP). This Methanocorpusculum labreanum (strain ATCC 43576 / DSM 4855 / Z) protein is Probable cyclic pyranopterin monophosphate synthase.